We begin with the raw amino-acid sequence, 2090 residues long: Nuclear pore complex protein Nup205 (2090 aa).

This sequence belongs to the NUP186/NUP192/NUP205 family. As to quaternary structure, part of the nuclear pore complex (NPC).

It is found in the nucleus. It localises to the nuclear pore complex. Its function is as follows. Plays a role in the nuclear pore complex (NPC) assembly and maintenance, but with limited role in NPC permeability. Required for specific nuclear import pathways such as Mad import. The polypeptide is Nuclear pore complex protein Nup205 (Drosophila melanogaster (Fruit fly)).